The chain runs to 394 residues: Succinate--CoA ligase [ADP-forming] subunit beta (394 aa).

The ATP-grasp domain maps to 9-243 (KDILAGFGIA…YSQLNPLEIA (235 aa)). ATP contacts are provided by residues Lys-45, 52–54 (GRG), Glu-98, Val-101, and Glu-106. Mg(2+) is bound by residues Asn-198 and Asp-212. Substrate is bound by residues Asn-263 and 320–322 (GIM).

It belongs to the succinate/malate CoA ligase beta subunit family. Heterotetramer of two alpha and two beta subunits. Mg(2+) serves as cofactor.

It carries out the reaction succinate + ATP + CoA = succinyl-CoA + ADP + phosphate. The catalysed reaction is GTP + succinate + CoA = succinyl-CoA + GDP + phosphate. It functions in the pathway carbohydrate metabolism; tricarboxylic acid cycle; succinate from succinyl-CoA (ligase route): step 1/1. In terms of biological role, succinyl-CoA synthetase functions in the citric acid cycle (TCA), coupling the hydrolysis of succinyl-CoA to the synthesis of either ATP or GTP and thus represents the only step of substrate-level phosphorylation in the TCA. The beta subunit provides nucleotide specificity of the enzyme and binds the substrate succinate, while the binding sites for coenzyme A and phosphate are found in the alpha subunit. This chain is Succinate--CoA ligase [ADP-forming] subunit beta, found in Pelobacter propionicus (strain DSM 2379 / NBRC 103807 / OttBd1).